The chain runs to 74 residues: UPF0435 protein BAA_0470 (74 aa).

The protein belongs to the UPF0435 family.

The chain is UPF0435 protein BAA_0470 from Bacillus anthracis (strain A0248).